Reading from the N-terminus, the 418-residue chain is Fumarylacetoacetase (418 aa).

Asp127 is a Ca(2+) binding site. Catalysis depends on His134, which acts as the Proton acceptor. Ca(2+)-binding residues include Glu200, Glu202, and Asp235. The Mg(2+) site is built by Asp235, Lys255, and Thr259.

The protein belongs to the FAH family. It depends on Ca(2+) as a cofactor. Mg(2+) is required as a cofactor. In terms of tissue distribution, highly expressed in the intestine and the hypodermis.

The enzyme catalyses 4-fumarylacetoacetate + H2O = acetoacetate + fumarate + H(+). It functions in the pathway amino-acid degradation; L-phenylalanine degradation; acetoacetate and fumarate from L-phenylalanine: step 6/6. Functionally, fumarylacetoacetase involved in the tyrosine degradation pathway. The chain is Fumarylacetoacetase from Caenorhabditis elegans.